A 298-amino-acid chain; its full sequence is Elongation factor Ts (298 aa).

Residues 78 to 81 are involved in Mg(2+) ion dislocation from EF-Tu; it reads TDFV.

Belongs to the EF-Ts family.

Its subcellular location is the cytoplasm. Its function is as follows. Associates with the EF-Tu.GDP complex and induces the exchange of GDP to GTP. It remains bound to the aminoacyl-tRNA.EF-Tu.GTP complex up to the GTP hydrolysis stage on the ribosome. The sequence is that of Elongation factor Ts from Mycoplasmopsis agalactiae (strain NCTC 10123 / CIP 59.7 / PG2) (Mycoplasma agalactiae).